Here is a 237-residue protein sequence, read N- to C-terminus: Undecaprenyl-diphosphatase (237 aa).

7 helical membrane passes run 38–58 (QTAV…FDGI), 65–85 (WRII…GVLF), 92–112 (LFSS…ILMF), 126–146 (MSFL…FPGI), 166–186 (ALQY…ILGL), 191–211 (VTIL…YVLS), and 217–237 (GKIW…YLVG).

Belongs to the UppP family.

Its subcellular location is the cell inner membrane. The enzyme catalyses di-trans,octa-cis-undecaprenyl diphosphate + H2O = di-trans,octa-cis-undecaprenyl phosphate + phosphate + H(+). Its function is as follows. Catalyzes the dephosphorylation of undecaprenyl diphosphate (UPP). Confers resistance to bacitracin. This chain is Undecaprenyl-diphosphatase, found in Thermotoga sp. (strain RQ2).